A 99-amino-acid chain; its full sequence is UPF0386 protein mll0189 (99 aa).

Belongs to the UPF0386 family.

This chain is UPF0386 protein mll0189, found in Mesorhizobium japonicum (strain LMG 29417 / CECT 9101 / MAFF 303099) (Mesorhizobium loti (strain MAFF 303099)).